Reading from the N-terminus, the 87-residue chain is DNA-directed RNA polymerase subunit Rpo5 (87 aa).

The protein belongs to the archaeal Rpo5/eukaryotic RPB5 RNA polymerase subunit family. In terms of assembly, part of the RNA polymerase complex.

The protein localises to the cytoplasm. It carries out the reaction RNA(n) + a ribonucleoside 5'-triphosphate = RNA(n+1) + diphosphate. In terms of biological role, DNA-dependent RNA polymerase (RNAP) catalyzes the transcription of DNA into RNA using the four ribonucleoside triphosphates as substrates. In Thermoplasma acidophilum (strain ATCC 25905 / DSM 1728 / JCM 9062 / NBRC 15155 / AMRC-C165), this protein is DNA-directed RNA polymerase subunit Rpo5.